A 473-amino-acid chain; its full sequence is Ribulose bisphosphate carboxylase large chain (473 aa).

Substrate-binding residues include asparagine 116 and threonine 166. Lysine 168 acts as the Proton acceptor in catalysis. Lysine 170 contributes to the substrate binding site. Mg(2+) contacts are provided by lysine 194, aspartate 196, and glutamate 197. N6-carboxylysine is present on lysine 194. Residue histidine 287 is the Proton acceptor of the active site. Substrate contacts are provided by arginine 288, histidine 320, and serine 372.

It belongs to the RuBisCO large chain family. Type I subfamily. Heterohexadecamer of 8 large chains and 8 small chains. Mg(2+) serves as cofactor.

The catalysed reaction is 2 (2R)-3-phosphoglycerate + 2 H(+) = D-ribulose 1,5-bisphosphate + CO2 + H2O. It catalyses the reaction D-ribulose 1,5-bisphosphate + O2 = 2-phosphoglycolate + (2R)-3-phosphoglycerate + 2 H(+). Its function is as follows. RuBisCO catalyzes two reactions: the carboxylation of D-ribulose 1,5-bisphosphate, the primary event in carbon dioxide fixation, as well as the oxidative fragmentation of the pentose substrate. Both reactions occur simultaneously and in competition at the same active site. The polypeptide is Ribulose bisphosphate carboxylase large chain (Halorhodospira halophila (strain DSM 244 / SL1) (Ectothiorhodospira halophila (strain DSM 244 / SL1))).